A 555-amino-acid polypeptide reads, in one-letter code: Glutamine--tRNA ligase (555 aa).

The short motif at 34–44 is the 'HIGH' region element; sequence PEPNGYLHIGH. Residues 35–37 and 41–47 contribute to the ATP site; these read EPN and HIGHAKS. Residues D67 and Y212 each contribute to the L-glutamine site. ATP-binding positions include T231, 261 to 262, and 269 to 271; these read RL and MSK. The short motif at 268–272 is the 'KMSKS' region element; the sequence is VMSKR. An interaction with tRNA region spans residues 317–324; the sequence is TKQDNTIE.

Belongs to the class-I aminoacyl-tRNA synthetase family. As to quaternary structure, monomer.

Its subcellular location is the cytoplasm. It catalyses the reaction tRNA(Gln) + L-glutamine + ATP = L-glutaminyl-tRNA(Gln) + AMP + diphosphate. This Enterobacter sp. (strain 638) protein is Glutamine--tRNA ligase.